A 66-amino-acid chain; its full sequence is Cold shock-like protein CspD (66 aa).

The CSD domain maps to 4–63; sequence GKVKWFNSEKGFGFIEVEGGDDVFVHFSAIQGDGFKTLEEGQEVSFEIVEGNRGPQAANV.

As to quaternary structure, homodimer.

It is found in the cytoplasm. The sequence is that of Cold shock-like protein CspD (cspD) from Bacillus anthracis.